Here is a 130-residue protein sequence, read N- to C-terminus: MADNQYYGTGRRKNSTARVFLRPGSGNIKINNRELNEYFGRETAQMVVRQPLELVEMTEKFDMYITVSGGGTTGQAGAIRHGITRALMQYDEALRGPLRKEGYVTRDARQVERKKIGLHKARKRPQFSKR.

This sequence belongs to the universal ribosomal protein uS9 family.

The polypeptide is Small ribosomal subunit protein uS9 (Idiomarina loihiensis (strain ATCC BAA-735 / DSM 15497 / L2-TR)).